We begin with the raw amino-acid sequence, 118 residues long: UPF0295 protein BC_0520 (118 aa).

2 helical membrane-spanning segments follow: residues isoleucine 12–phenylalanine 32 and phenylalanine 43–methionine 63.

This sequence belongs to the UPF0295 family.

The protein resides in the cell membrane. The sequence is that of UPF0295 protein BC_0520 from Bacillus cereus (strain ATCC 14579 / DSM 31 / CCUG 7414 / JCM 2152 / NBRC 15305 / NCIMB 9373 / NCTC 2599 / NRRL B-3711).